A 409-amino-acid chain; its full sequence is Nucleoprotein (409 aa).

4 disordered regions span residues 1 to 31 (MASG…GSSG), 44 to 84 (LNSP…KGGR), 164 to 196 (RSGR…EDDL), and 238 to 258 (VDQV…DDKM). A compositionally biased stretch (low complexity) spans 15–31 (PVIKLGGPKPPKVGSSG). Residues 29–160 (SSGNVSWFQA…GNFRWDFIPL (132 aa)) form an RNA-binding region. A CoV N NTD domain is found at 31-156 (GNVSWFQAIK…GGPDGNFRWD (126 aa)). Basic residues predominate over residues 70-84 (YWRRQARFKPGKGGR). Over residues 166-179 (GRSTAASSAASSRA) the composition is skewed to low complexity. Basic and acidic residues-rich tracts occupy residues 180-192 (PSRE…RSGS) and 247-258 (KGKEGNFGDDKM). A phosphoserine; by host mark is found at Ser190 and Ser192. Residues 215-331 (TKAKADEMAH…QCVDGVGTRP (117 aa)) enclose the CoV N CTD domain. Residues 226 to 333 (RYCKRTIPPN…VDGVGTRPKD (108 aa)) are dimerization. A disulfide bond links Cys320 and Cys323. The tract at residues 326–409 (GVGTRPKDDE…GDSALGENEL (84 aa)) is disordered. Residues 358 to 367 (QRPKKEKKPK) are compositionally biased toward basic residues. Over residues 368-384 (KQDDEVDKALTSDEERN) the composition is skewed to basic and acidic residues. At Thr378 the chain carries Phosphothreonine; by host. Ser379 carries the post-translational modification Phosphoserine; by host.

This sequence belongs to the gammacoronavirus nucleocapsid protein family. As to quaternary structure, homooligomer. Both monomeric and oligomeric forms interact with RNA. Interacts with protein M. Interacts with NSP3; this interaction serves to tether the genome to the newly translated replicase-transcriptase complex at a very early stage of infection. ADP-ribosylated. The ADP-ribosylation is retained in the virion during infection. Post-translationally, phosphorylated on serine and threonine residues.

Its subcellular location is the virion. It is found in the host endoplasmic reticulum-Golgi intermediate compartment. It localises to the host Golgi apparatus. Packages the positive strand viral genome RNA into a helical ribonucleocapsid (RNP) and plays a fundamental role during virion assembly through its interactions with the viral genome and membrane protein M. Plays an important role in enhancing the efficiency of subgenomic viral RNA transcription as well as viral replication. This chain is Nucleoprotein, found in Gallus gallus (Chicken).